Reading from the N-terminus, the 286-residue chain is MNEDTPPFYFISVCDNFRDNTAEHVFDMLIERHSSFENYPIENTAFINSLIVNGFKYNQVDDHVVCEYCEAEIKNWSEDECIEYAHVTLSPYCAYANKIAERESFGDNITINAVLVKEGKPKCVYRCMSNLQSRMDTFVNFWPAALRDMITNIAEAGLFYTGRGDETVCFFCDCCVRDWHTNEDTWQRHAAENPQCYFVLSVKGKEFCQNSITVTHVDKRDDDNLNENADDIEEKYECKVCLERQRDAVLMPCRHFCVCVQCYFGLDQKCPTCRQDVTDFIKIFVV.

BIR repeat units lie at residues 29–96 (LIER…CAYA) and 131–199 (LQSR…CYFV). Zn(2+) is bound by residues Cys169, Cys172, His189, and Cys196. An RING-type zinc finger spans residues 238-274 (CKVCLERQRDAVLMPCRHFCVCVQCYFGLDQKCPTCR).

Its function is as follows. Acts by blocking cellular apoptosis early in infection. Later, stimulates caspase-3-like protease activity and induces apoptosis, probably to favor the release of occluded virions. The chain is Apoptosis inhibitor 1 (IAP1) from Lepidoptera (butterflies and moths).